Reading from the N-terminus, the 104-residue chain is Protein ArtA (104 aa).

This is Protein ArtA (artA) from Escherichia coli (strain K12).